Here is a 212-residue protein sequence, read N- to C-terminus: MGSSSGQPEFDYLFKVLLIGDSGVGKSSLLLSFTSNTFDDLSPTIGVDFKVKYLTIGEKKLKLAIWDTAGQERFRTLTSSYYRGAQGIIMVYDVTRRDTFTNLSDIWAKEIDLYSTNQDCIKMLVGNKVDKESERAVSKKEGIDFAREYGCLFLECSAKTRVNVEQCFEELVLKILETPSLTAEGSSGGKKNIFKQNPAQTTSTSSSYCCSS.

An N-acetylglycine modification is found at Gly-2. Residue 20–27 (GDSGVGKS) coordinates GTP. Residues 41-49 (LSPTIGVDF) carry the Effector region motif. GTP is bound by residues 67–71 (DTAGQ), 127–130 (NKVD), and 157–158 (SA). Residues 182–212 (TAEGSSGGKKNIFKQNPAQTTSTSSSYCCSS) form a disordered region. Residues 201–212 (TTSTSSSYCCSS) are compositionally biased toward low complexity. Residues Cys-209 and Cys-210 are each lipidated (S-geranylgeranyl cysteine).

The protein belongs to the small GTPase superfamily. Rab family.

Its subcellular location is the cell membrane. Its function is as follows. Intracellular vesicle trafficking and protein transport. The polypeptide is Ras-related protein RABC1 (RABC1) (Arabidopsis thaliana (Mouse-ear cress)).